The sequence spans 275 residues: 3-methyl-2-oxobutanoate hydroxymethyltransferase (275 aa).

Mg(2+) is bound by residues D49 and D88. Residues 49–50, D88, and K118 each bind 3-methyl-2-oxobutanoate; that span reads DS. E120 contacts Mg(2+). The active-site Proton acceptor is the E187.

It belongs to the PanB family. As to quaternary structure, homodecamer; pentamer of dimers. It depends on Mg(2+) as a cofactor.

The protein localises to the cytoplasm. The catalysed reaction is 3-methyl-2-oxobutanoate + (6R)-5,10-methylene-5,6,7,8-tetrahydrofolate + H2O = 2-dehydropantoate + (6S)-5,6,7,8-tetrahydrofolate. The protein operates within cofactor biosynthesis; (R)-pantothenate biosynthesis; (R)-pantoate from 3-methyl-2-oxobutanoate: step 1/2. Its function is as follows. Catalyzes the reversible reaction in which hydroxymethyl group from 5,10-methylenetetrahydrofolate is transferred onto alpha-ketoisovalerate to form ketopantoate. In Nitrobacter hamburgensis (strain DSM 10229 / NCIMB 13809 / X14), this protein is 3-methyl-2-oxobutanoate hydroxymethyltransferase.